We begin with the raw amino-acid sequence, 292 residues long: NAD kinase (292 aa).

Residue Asp73 is the Proton acceptor of the active site. Residues 73–74, 147–148, His158, Arg175, Asp177, 188–193, and Gln247 contribute to the NAD(+) site; these read DG, NE, and TAYSLS.

This sequence belongs to the NAD kinase family. A divalent metal cation serves as cofactor.

It is found in the cytoplasm. The enzyme catalyses NAD(+) + ATP = ADP + NADP(+) + H(+). Involved in the regulation of the intracellular balance of NAD and NADP, and is a key enzyme in the biosynthesis of NADP. Catalyzes specifically the phosphorylation on 2'-hydroxyl of the adenosine moiety of NAD to yield NADP. The sequence is that of NAD kinase from Salmonella choleraesuis (strain SC-B67).